Consider the following 200-residue polypeptide: dTTP/UTP pyrophosphatase (200 aa).

The Proton acceptor role is filled by D76.

The protein belongs to the Maf family. YhdE subfamily. The cofactor is a divalent metal cation.

It is found in the cytoplasm. The enzyme catalyses dTTP + H2O = dTMP + diphosphate + H(+). It carries out the reaction UTP + H2O = UMP + diphosphate + H(+). Functionally, nucleoside triphosphate pyrophosphatase that hydrolyzes dTTP and UTP. May have a dual role in cell division arrest and in preventing the incorporation of modified nucleotides into cellular nucleic acids. This chain is dTTP/UTP pyrophosphatase, found in Acetivibrio thermocellus (strain ATCC 27405 / DSM 1237 / JCM 9322 / NBRC 103400 / NCIMB 10682 / NRRL B-4536 / VPI 7372) (Clostridium thermocellum).